We begin with the raw amino-acid sequence, 161 residues long: Large ribosomal subunit protein uL10 (161 aa).

It belongs to the universal ribosomal protein uL10 family. As to quaternary structure, part of the ribosomal stalk of the 50S ribosomal subunit. The N-terminus interacts with L11 and the large rRNA to form the base of the stalk. The C-terminus forms an elongated spine to which L12 dimers bind in a sequential fashion forming a multimeric L10(L12)X complex.

Its function is as follows. Forms part of the ribosomal stalk, playing a central role in the interaction of the ribosome with GTP-bound translation factors. This chain is Large ribosomal subunit protein uL10, found in Malacoplasma penetrans (strain HF-2) (Mycoplasma penetrans).